The primary structure comprises 290 residues: 4-diphosphocytidyl-2-C-methyl-D-erythritol kinase (290 aa).

Residue Lys10 is part of the active site. Residue 95-105 (PVAAGLAGGSS) coordinates ATP. Residue Asp137 is part of the active site.

This sequence belongs to the GHMP kinase family. IspE subfamily.

The enzyme catalyses 4-CDP-2-C-methyl-D-erythritol + ATP = 4-CDP-2-C-methyl-D-erythritol 2-phosphate + ADP + H(+). It functions in the pathway isoprenoid biosynthesis; isopentenyl diphosphate biosynthesis via DXP pathway; isopentenyl diphosphate from 1-deoxy-D-xylulose 5-phosphate: step 3/6. Catalyzes the phosphorylation of the position 2 hydroxy group of 4-diphosphocytidyl-2C-methyl-D-erythritol. The polypeptide is 4-diphosphocytidyl-2-C-methyl-D-erythritol kinase (Geobacillus thermodenitrificans (strain NG80-2)).